Consider the following 378-residue polypeptide: Queuine tRNA-ribosyltransferase (378 aa).

Asp93 (proton acceptor) is an active-site residue. Substrate contacts are provided by residues 93–97 (DSGGF), Asp147, Gln189, and Gly216. The segment at 247–253 (GVGTFRE) is RNA binding. The active-site Nucleophile is the Asp266. The interval 271 to 275 (TRVAR) is RNA binding; important for wobble base 34 recognition. Residues Cys308, Cys310, Cys313, and His339 each contribute to the Zn(2+) site.

It belongs to the queuine tRNA-ribosyltransferase family. As to quaternary structure, homodimer. Within each dimer, one monomer is responsible for RNA recognition and catalysis, while the other monomer binds to the replacement base PreQ1. The cofactor is Zn(2+).

It catalyses the reaction 7-aminomethyl-7-carbaguanine + guanosine(34) in tRNA = 7-aminomethyl-7-carbaguanosine(34) in tRNA + guanine. Its pathway is tRNA modification; tRNA-queuosine biosynthesis. In terms of biological role, catalyzes the base-exchange of a guanine (G) residue with the queuine precursor 7-aminomethyl-7-deazaguanine (PreQ1) at position 34 (anticodon wobble position) in tRNAs with GU(N) anticodons (tRNA-Asp, -Asn, -His and -Tyr). Catalysis occurs through a double-displacement mechanism. The nucleophile active site attacks the C1' of nucleotide 34 to detach the guanine base from the RNA, forming a covalent enzyme-RNA intermediate. The proton acceptor active site deprotonates the incoming PreQ1, allowing a nucleophilic attack on the C1' of the ribose to form the product. After dissociation, two additional enzymatic reactions on the tRNA convert PreQ1 to queuine (Q), resulting in the hypermodified nucleoside queuosine (7-(((4,5-cis-dihydroxy-2-cyclopenten-1-yl)amino)methyl)-7-deazaguanosine). In Gloeobacter violaceus (strain ATCC 29082 / PCC 7421), this protein is Queuine tRNA-ribosyltransferase.